Reading from the N-terminus, the 344-residue chain is MALPRPTSPHARGSNRTPAIMRLVLGACVPGLLTLTWLYGPGTLLNLAWASLVALACEAAMLALRKRPPGVFLKDGSALVTALLLAVALPPYAPWWLTLVATFFALVFGKHLYGGLGQNPFNPAMLGYVVALVSFPLEMTRWPSPDSALGLPDSLREFLGLATRPDAWAHATALDVLKTDRSLTVDELFAGNPAFGHLGSAGSEWVNLAFLLGGLFLLWRRLFTWHAPLGMLAGLFAMSLLFWNGSGSDSHGSPLFHLFSGATMLGAFFIVTDPVSGATSNRGRLVFGLGVGVLTYVIRAWGGYPDGVAFAVLLMNLAAPTIDYYTRPRTYGHRKAERGFKAGD.

Transmembrane regions (helical) follow at residues 23-43 (LVLG…GPGT), 44-64 (LLNL…MLAL), 77-99 (SALV…WLTL), and 120-140 (PFNP…LEMT). Thr172 carries the post-translational modification FMN phosphoryl threonine. The next 5 helical transmembrane spans lie at 198-218 (LGSA…LFLL), 222-242 (LFTW…SLLF), 252-272 (GSPL…FIVT), 285-305 (LVFG…GGYP), and 306-326 (DGVA…DYYT).

It belongs to the NqrB/RnfD family. In terms of assembly, the complex is composed of six subunits: RnfA, RnfB, RnfC, RnfD, RnfE and RnfG. FMN serves as cofactor.

The protein localises to the cell inner membrane. In terms of biological role, part of a membrane-bound complex that couples electron transfer with translocation of ions across the membrane. The chain is Ion-translocating oxidoreductase complex subunit D from Pseudomonas aeruginosa (strain UCBPP-PA14).